The following is a 259-amino-acid chain: Acyl-[acyl-carrier-protein]--UDP-N-acetylglucosamine O-acyltransferase (259 aa).

Belongs to the transferase hexapeptide repeat family. LpxA subfamily. As to quaternary structure, homotrimer.

It localises to the cytoplasm. The catalysed reaction is a (3R)-hydroxyacyl-[ACP] + UDP-N-acetyl-alpha-D-glucosamine = a UDP-3-O-[(3R)-3-hydroxyacyl]-N-acetyl-alpha-D-glucosamine + holo-[ACP]. It participates in glycolipid biosynthesis; lipid IV(A) biosynthesis; lipid IV(A) from (3R)-3-hydroxytetradecanoyl-[acyl-carrier-protein] and UDP-N-acetyl-alpha-D-glucosamine: step 1/6. Its function is as follows. Involved in the biosynthesis of lipid A, a phosphorylated glycolipid that anchors the lipopolysaccharide to the outer membrane of the cell. In Akkermansia muciniphila (strain ATCC BAA-835 / DSM 22959 / JCM 33894 / BCRC 81048 / CCUG 64013 / CIP 107961 / Muc), this protein is Acyl-[acyl-carrier-protein]--UDP-N-acetylglucosamine O-acyltransferase.